A 347-amino-acid chain; its full sequence is Photosystem II protein D1 (347 aa).

A run of 3 helical transmembrane segments spans residues 32–49 (YIGW…LATV), 121–136 (HFIL…EWEF), and 145–159 (WIFV…AASA). Histidine 121 is a binding site for chlorophyll a. Pheophytin a is bound at residue tyrosine 129. Residues aspartate 173 and glutamate 192 each coordinate [CaMn4O5] cluster. Residues 200 to 221 (FHILGVAAVFGGSLFSAMHGSL) form a helical membrane-spanning segment. Histidine 201 contributes to the chlorophyll a binding site. Residues histidine 218 and 267–268 (SF) contribute to the a quinone site. Histidine 218 provides a ligand contact to Fe cation. Histidine 275 is a Fe cation binding site. A helical transmembrane segment spans residues 277 to 291 (FLAAWPVIGIWFTAL). Residues histidine 335, glutamate 336, aspartate 345, and alanine 347 each contribute to the [CaMn4O5] cluster site.

Belongs to the reaction center PufL/M/PsbA/D family. PSII is composed of 1 copy each of membrane proteins PsbA, PsbB, PsbC, PsbD, PsbE, PsbF, PsbH, PsbI, PsbJ, PsbK, PsbL, PsbM, PsbT, PsbX, PsbY, PsbZ, Psb30/Ycf12, at least 3 peripheral proteins of the oxygen-evolving complex and a large number of cofactors. It forms dimeric complexes. The D1/D2 heterodimer binds P680, chlorophylls that are the primary electron donor of PSII, and subsequent electron acceptors. It shares a non-heme iron and each subunit binds pheophytin, quinone, additional chlorophylls, carotenoids and lipids. D1 provides most of the ligands for the Mn4-Ca-O5 cluster of the oxygen-evolving complex (OEC). There is also a Cl(-1) ion associated with D1 and D2, which is required for oxygen evolution. The PSII complex binds additional chlorophylls, carotenoids and specific lipids. serves as cofactor. Tyr-164 forms a radical intermediate that is referred to as redox-active TyrZ, YZ or Y-Z.

It is found in the plastid. It localises to the chloroplast thylakoid membrane. It catalyses the reaction 2 a plastoquinone + 4 hnu + 2 H2O = 2 a plastoquinol + O2. Photosystem II (PSII) is a light-driven water:plastoquinone oxidoreductase that uses light energy to abstract electrons from H(2)O, generating O(2) and a proton gradient subsequently used for ATP formation. It consists of a core antenna complex that captures photons, and an electron transfer chain that converts photonic excitation into a charge separation. The D1/D2 (PsbA/PsbD) reaction center heterodimer binds P680, the primary electron donor of PSII as well as several subsequent electron acceptors. This is Photosystem II protein D1 from Heterocapsa niei (Dinoflagellate).